The primary structure comprises 571 residues: Septation ring formation regulator EzrA (571 aa).

At 1-3 the chain is on the extracellular side; that stretch reads MYY. The helical transmembrane segment at 4-22 threads the bilayer; that stretch reads MLIGFIIVVIAIISAGYIL. Topologically, residues 23-571 are cytoplasmic; the sequence is KRKHYQRINE…ESKVSVDDIE (549 aa). Coiled coils occupy residues 169 to 214, 249 to 298, 326 to 374, 400 to 438, and 474 to 529; these read VETK…AQME, AQME…DTLE, DALA…ASGE, KFAEELRSLRKDELEARDDAERMRRAIVTLDRKMERERL, and TQDW…ENHF.

This sequence belongs to the EzrA family.

It is found in the cell membrane. Its function is as follows. Negative regulator of FtsZ ring formation; modulates the frequency and position of FtsZ ring formation. Inhibits FtsZ ring formation at polar sites. Interacts either with FtsZ or with one of its binding partners to promote depolymerization. In Listeria welshimeri serovar 6b (strain ATCC 35897 / DSM 20650 / CCUG 15529 / CIP 8149 / NCTC 11857 / SLCC 5334 / V8), this protein is Septation ring formation regulator EzrA.